Reading from the N-terminus, the 107-residue chain is Sperm-specific class P protein 32 (107 aa).

The tract at residues 1-20 (MLTIEPPSATFPASGGSSTH) is disordered. One can recognise an MSP domain in the interval 1–107 (MLTIEPPSAT…GDVTILLKTN (107 aa)).

As to expression, expressed at higher level in testis.

In Caenorhabditis elegans, this protein is Sperm-specific class P protein 32 (ssp-32).